A 243-amino-acid polypeptide reads, in one-letter code: GTP cyclohydrolase 1 type 2 (243 aa).

A divalent metal cation is bound by residues histidine 63, histidine 64, aspartate 102, histidine 209, and glutamate 213.

It belongs to the GTP cyclohydrolase I type 2/NIF3 family. Homohexamer.

It carries out the reaction GTP + H2O = 7,8-dihydroneopterin 3'-triphosphate + formate + H(+). It participates in cofactor biosynthesis; 7,8-dihydroneopterin triphosphate biosynthesis; 7,8-dihydroneopterin triphosphate from GTP: step 1/1. Converts GTP to dihydroneopterin triphosphate. Is not active with GDP, GMP, ATP, CTP or UTP as substrate. The protein is GTP cyclohydrolase 1 type 2 of Helicobacter pylori (strain ATCC 700392 / 26695) (Campylobacter pylori).